A 556-amino-acid polypeptide reads, in one-letter code: Oxygen-dependent choline dehydrogenase (556 aa).

FAD is bound at residue 6 to 35 (DYIIIGAGSAGNVLAARLTEDPGVTVLLLE). H475 acts as the Proton acceptor in catalysis.

The protein belongs to the GMC oxidoreductase family. FAD serves as cofactor.

The enzyme catalyses choline + A = betaine aldehyde + AH2. It carries out the reaction betaine aldehyde + NAD(+) + H2O = glycine betaine + NADH + 2 H(+). Its pathway is amine and polyamine biosynthesis; betaine biosynthesis via choline pathway; betaine aldehyde from choline (cytochrome c reductase route): step 1/1. Its function is as follows. Involved in the biosynthesis of the osmoprotectant glycine betaine. Catalyzes the oxidation of choline to betaine aldehyde and betaine aldehyde to glycine betaine at the same rate. The polypeptide is Oxygen-dependent choline dehydrogenase (Xanthomonas euvesicatoria pv. vesicatoria (strain 85-10) (Xanthomonas campestris pv. vesicatoria)).